The sequence spans 634 residues: Probable potassium transport system protein Kup 2 (634 aa).

Helical transmembrane passes span 15–35 (LTLG…LYAF), 55–75 (VLSL…VIFL), 101–121 (WVAV…DAII), 142–162 (GMSQ…LFMF), 173–193 (LFGP…LWHI), 208–228 (AVTF…AVFL), 252–272 (WLSF…ALAL), 303–323 (LVIL…TGAY), 351–371 (IYMP…VLGF), 381–401 (YGIA…LIAW), 408–428 (PVWT…FFGA), and 435–455 (EGGW…FTWL).

This sequence belongs to the HAK/KUP transporter (TC 2.A.72) family.

It localises to the cell inner membrane. The catalysed reaction is K(+)(in) + H(+)(in) = K(+)(out) + H(+)(out). Functionally, transport of potassium into the cell. Likely operates as a K(+):H(+) symporter. In Novosphingobium aromaticivorans (strain ATCC 700278 / DSM 12444 / CCUG 56034 / CIP 105152 / NBRC 16084 / F199), this protein is Probable potassium transport system protein Kup 2.